Reading from the N-terminus, the 430-residue chain is Ribosomal protein uS12 methylthiotransferase RimO (430 aa).

One can recognise an MTTase N-terminal domain in the interval 2–118 (AKIFTISLGC…IDNVIKRPKH (117 aa)). [4Fe-4S] cluster is bound by residues C11, C47, C81, C150, C154, and C157. The region spanning 136–368 (LTAPHSAYLK…AQSRVIDSIN (233 aa)) is the Radical SAM core domain. A TRAM domain is found at 369-430 (RKLKGKTVKV…KGYNRTGKII (62 aa)).

This sequence belongs to the methylthiotransferase family. RimO subfamily. [4Fe-4S] cluster serves as cofactor.

It localises to the cytoplasm. It carries out the reaction L-aspartate(89)-[ribosomal protein uS12]-hydrogen + (sulfur carrier)-SH + AH2 + 2 S-adenosyl-L-methionine = 3-methylsulfanyl-L-aspartate(89)-[ribosomal protein uS12]-hydrogen + (sulfur carrier)-H + 5'-deoxyadenosine + L-methionine + A + S-adenosyl-L-homocysteine + 2 H(+). Functionally, catalyzes the methylthiolation of an aspartic acid residue of ribosomal protein uS12. The sequence is that of Ribosomal protein uS12 methylthiotransferase RimO from Elusimicrobium minutum (strain Pei191).